The following is a 447-amino-acid chain: Sulfoquinovose isomerase (447 aa).

Belongs to the SqvD family.

The catalysed reaction is 6-sulfo-beta-D-quinovose = 6-deoxy-6-sulfo-D-fructose. Functionally, part of the sulfo-TK pathway, a D-sulfoquinovose degradation pathway that produces 2-hydroxyethane-1-sulfonate (isethionate). Catalyzes the isomerization of sulfoquinovose (SQ) to 6-deoxy-6-sulfo-D-fructose (SF). The chain is Sulfoquinovose isomerase from Clostridium sp. (strain MSTE9).